Consider the following 295-residue polypeptide: GTPase Era (295 aa).

Residues 7-176 (KTVSVCIIGR…ITSKAKIAPW (170 aa)) enclose the Era-type G domain. A G1 region spans residues 15-22 (GRPNSGKS). GTP is bound at residue 15-22 (GRPNSGKS). The G2 stretch occupies residues 41-45 (QTTRS). Residues 62 to 65 (DTPG) are G3. GTP is bound by residues 62-66 (DTPGI) and 124-127 (NKID). The interval 124–127 (NKID) is G4. The tract at residues 152–154 (ISA) is G5. In terms of domain architecture, KH type-2 spans 204–281 (LQQELPYKLT…HLFLFVKVQE (78 aa)).

This sequence belongs to the TRAFAC class TrmE-Era-EngA-EngB-Septin-like GTPase superfamily. Era GTPase family. As to quaternary structure, monomer.

The protein localises to the cytoplasm. It localises to the cell inner membrane. In terms of biological role, an essential GTPase that binds both GDP and GTP, with rapid nucleotide exchange. Plays a role in 16S rRNA processing and 30S ribosomal subunit biogenesis and possibly also in cell cycle regulation and energy metabolism. This chain is GTPase Era, found in Rickettsia bellii (strain RML369-C).